A 156-amino-acid polypeptide reads, in one-letter code: Small ribosomal subunit protein uS7 (156 aa).

It belongs to the universal ribosomal protein uS7 family. In terms of assembly, part of the 30S ribosomal subunit. Contacts proteins S9 and S11.

Functionally, one of the primary rRNA binding proteins, it binds directly to 16S rRNA where it nucleates assembly of the head domain of the 30S subunit. Is located at the subunit interface close to the decoding center, probably blocks exit of the E-site tRNA. This Buchnera aphidicola subsp. Cinara cedri (strain Cc) protein is Small ribosomal subunit protein uS7.